A 164-amino-acid polypeptide reads, in one-letter code: Crossover junction endodeoxyribonuclease RuvC (164 aa).

Residues aspartate 7, glutamate 67, and aspartate 139 contribute to the active site. Positions 7, 67, and 139 each coordinate Mg(2+).

Belongs to the RuvC family. As to quaternary structure, homodimer which binds Holliday junction (HJ) DNA. The HJ becomes 2-fold symmetrical on binding to RuvC with unstacked arms; it has a different conformation from HJ DNA in complex with RuvA. In the full resolvosome a probable DNA-RuvA(4)-RuvB(12)-RuvC(2) complex forms which resolves the HJ. The cofactor is Mg(2+).

It localises to the cytoplasm. The catalysed reaction is Endonucleolytic cleavage at a junction such as a reciprocal single-stranded crossover between two homologous DNA duplexes (Holliday junction).. The RuvA-RuvB-RuvC complex processes Holliday junction (HJ) DNA during genetic recombination and DNA repair. Endonuclease that resolves HJ intermediates. Cleaves cruciform DNA by making single-stranded nicks across the HJ at symmetrical positions within the homologous arms, yielding a 5'-phosphate and a 3'-hydroxyl group; requires a central core of homology in the junction. The consensus cleavage sequence is 5'-(A/T)TT(C/G)-3'. Cleavage occurs on the 3'-side of the TT dinucleotide at the point of strand exchange. HJ branch migration catalyzed by RuvA-RuvB allows RuvC to scan DNA until it finds its consensus sequence, where it cleaves and resolves the cruciform DNA. In Geobacter sulfurreducens (strain ATCC 51573 / DSM 12127 / PCA), this protein is Crossover junction endodeoxyribonuclease RuvC.